The sequence spans 292 residues: 2-(5''-triphosphoribosyl)-3'-dephosphocoenzyme-A synthase (292 aa).

It belongs to the CitG/MdcB family.

It carries out the reaction 3'-dephospho-CoA + ATP = 2'-(5''-triphospho-alpha-D-ribosyl)-3'-dephospho-CoA + adenine. Functionally, catalyzes the formation of 2-(5''-triphosphoribosyl)-3'-dephosphocoenzyme-A, the precursor of the prosthetic group of the holo-acyl carrier protein (gamma chain) of citrate lyase, from ATP and dephospho-CoA. This Escherichia coli O6:K15:H31 (strain 536 / UPEC) protein is 2-(5''-triphosphoribosyl)-3'-dephosphocoenzyme-A synthase.